A 227-amino-acid chain; its full sequence is UPF0173 metal-dependent hydrolase Oter_4201 (227 aa).

This sequence belongs to the UPF0173 family.

This Opitutus terrae (strain DSM 11246 / JCM 15787 / PB90-1) protein is UPF0173 metal-dependent hydrolase Oter_4201.